Consider the following 134-residue polypeptide: Profilin (134 aa).

Belongs to the profilin family. Occurs in many kinds of cells as a complex with monomeric actin in a 1:1 ratio.

The protein localises to the cytoplasm. It is found in the cytoskeleton. Functionally, binds to actin and affects the structure of the cytoskeleton. At high concentrations, profilin prevents the polymerization of actin, whereas it enhances it at low concentrations. By binding to PIP2, it inhibits the formation of IP3 and DG. The polypeptide is Profilin (Brassica napus (Rape)).